The following is a 476-amino-acid chain: ATAGPASGKIRAVIGAVVDVQFEQGELPAILNALTIDQGNNQKLVLEVAQHLGENAVRAIAMDGTEGLVRGQTVVDTGAPISVPVGRGTLGRIINVVGEPIDERGPIECKQRNPIHADPPSFVEQSTEAEVLETGIKVVDLLAPYARGGKIGLFGGAGVGKTVFIQELINNIAKAHGGFSVFTGVGERTREGNDLYREMKETGVINLEGESKVALVFGQMNEPPGARARVALTGLTIAEYFRDEEGQDVLLFVDNIFRFTQAGSEVSALLGRIPSAVGYQPTLATDMGLLQERITTTRKGSVTSVQAVYVPADDLTDPAPATTFAHLDATTVLSRGISELGIYPAVDPLDSKSRLLDVSVVGQEHYDVATGVQQTLQAYKSLQDIIAILGMDELSEQDKLTVERARKIQRFLSQPFAVAEVFTGIEGKLVRLKDTIASFKAVLEGKYDHLPENAFYMVGGIEDVVAKAEKIAAEAN.

156 to 163 (GAGVGKTV) contributes to the ATP binding site.

As to quaternary structure, F-type ATP synthases have 2 components, the catalytic core F(1) and the membrane-embedded component F(0), linked together by a central stalk and a peripheral stalk. The central stalk, also called rotor shaft, is often seen as part of F(1). The peripheral stalk is seen as part of F(0). F(0) contains the membrane channel next to the rotor. F-type ATP synthases form dimers but each monomer functions independently in ATP generation. The dimer consists of 18 different polypeptides: ATP1 (subunit alpha, part of F(1), 3 molecules per monomer), ATP2 (subunit beta, part of F(1), 3 molecules per monomer), ATP3 (subunit gamma, part of the central stalk), ATP4 (subunit b, part of the peripheral stalk), ATP5/OSCP (subunit 5/OSCP, part of the peripheral stalk), ATP6 (subunit a, part of the peripheral stalk), ATP7 (subunit d, part of the peripheral stalk), ATP8 (subunit 8, part of the peripheral stalk), OLI1 (subunit c, part of the rotor, 10 molecules per monomer), ATP14 (subunit h, part of the peripheral stalk), ATP15 (subunit epsilon, part of the central stalk), ATP16 (subunit delta, part of the central stalk), ATP17 (subunit f, part of the peripheral stalk), ATP18 (subunit i/j, part of the peripheral stalk). Dimer-specific subunits are ATP19 (subunit k, at interface between monomers), ATP20 (subunit g, at interface between monomers), TIM11 (subunit e, at interface between monomers). Also contains subunit L.

The protein resides in the mitochondrion inner membrane. The enzyme catalyses ATP + H2O + 4 H(+)(in) = ADP + phosphate + 5 H(+)(out). Its function is as follows. Mitochondrial membrane ATP synthase (F(1)F(0) ATP synthase or Complex V) produces ATP from ADP in the presence of a proton gradient across the membrane which is generated by electron transport complexes of the respiratory chain. F-type ATP synthases consist of two structural domains, F(1) - containing the extramembraneous catalytic core, and F(0) - containing the membrane proton channel, linked together by a central stalk and a peripheral stalk. During catalysis, ATP synthesis in the catalytic domain of F(1) is coupled via a rotary mechanism of the central stalk subunits to proton translocation. Subunits alpha/ATP1 and beta/ATP2 form the catalytic core in F(1). Rotation of the central stalk against the surrounding alpha/ATP1(3)beta/ATP2(3) subunits leads to hydrolysis of ATP in three separate catalytic sites on the beta/ATP2 subunits. This Pichia angusta (Yeast) protein is ATP synthase subunit beta, mitochondrial.